Reading from the N-terminus, the 755-residue chain is Sentrin-specific protease 5 (755 aa).

Residues 268–321 are disordered; that stretch reads VQKVTGDHQETRRENGEGGSCSPFPSPEPKDPSCRHQPYFPDMDSSAVVKGTNS. Basic and acidic residues predominate over residues 272–283; it reads TGDHQETRRENG. Positions 567–724 are protease; that stretch reads HMLDMDDLAT…VFVLQYCKCL (158 aa). Catalysis depends on residues His646, Asp663, and Cys713.

It belongs to the peptidase C48 family. Interacts with CCAR2.

It is found in the nucleus. It localises to the nucleolus. In terms of biological role, protease that catalyzes two essential functions in the SUMO pathway: processing of full-length SUMO3 to its mature form and deconjugation of SUMO2 and SUMO3 from targeted proteins. Has weak proteolytic activity against full-length SUMO1 or SUMO1 conjugates. Required for cell division. The chain is Sentrin-specific protease 5 (SENP5) from Homo sapiens (Human).